The following is a 602-amino-acid chain: Leucine-rich repeat-containing protein 40 (602 aa).

A disordered region spans residues 1–26 (MSRHMRAPRFDPRAGFHAEGKDRGPS). The span at 8 to 24 (PRFDPRAGFHAEGKDRG) shows a compositional bias: basic and acidic residues. An LRR 1 repeat occupies 35 to 58 (ARSSGQLNLAGRNLGEVPQCVWRI). Phosphoserine is present on S71. 20 LRR repeats span residues 81–103 (QTDL…DLRL), 104–126 (LPAL…AIRE), 127–149 (LDNL…EITS), 150–172 (LKNL…GFEH), 174–195 (SCLE…DFAL), 196–219 (LSSL…ISRM), 221–241 (RLKH…DVGS), 242–266 (MESL…SCRQ), 268–287 (KELH…HLQH), 288–310 (LQAI…EMAL), 311–334 (LQSL…LGNL), 336–356 (LKFL…IIAK), 398–421 (IATL…LFDA), 424–447 (TTLI…IVEL), 449–470 (EMVL…ELCL), 471–494 (LQKL…MSSL), 496–517 (KLQT…LYRI), 519–540 (TLEA…KMKL), 541–564 (MENL…LGNC), and 566–587 (QLRT…ILMK).

The polypeptide is Leucine-rich repeat-containing protein 40 (Lrrc40) (Mus musculus (Mouse)).